The following is an 83-amino-acid chain: uncharacterized protein (83 aa).

Positions 1–20 (MRRALTLAVLATCAVLPALA) are cleaved as a signal peptide.

It to P.denitrificans and M.extorquens MoxJ.

This is an uncharacterized protein from Paracoccus denitrificans.